Reading from the N-terminus, the 109-residue chain is MPIYEFAFIAQQGLTQYELEGLSKGLSALLVKIGAELVKYEYWGLLDFAYSIAKNNKGHYCMMYIRAEPAAMDEFRRRVRLNEDVLRFLCLKVDKVCEGKSAMMGSDQD.

This sequence belongs to the bacterial ribosomal protein bS6 family.

Functionally, binds together with bS18 to 16S ribosomal RNA. This is Small ribosomal subunit protein bS6 from Anaplasma marginale (strain St. Maries).